Consider the following 215-residue polypeptide: Putative ribosome biogenesis protein slx9-like (215 aa).

3 disordered regions span residues 49 to 121, 133 to 157, and 189 to 215; these read IIPS…GLGM, DSMK…MSLK, and LQNQ…LKRK.

The protein belongs to the SLX9 family.

Its subcellular location is the nucleus. It localises to the nucleolus. Its function is as follows. Involved in ribosome biogenesis. The protein is Putative ribosome biogenesis protein slx9-like of Dictyostelium discoideum (Social amoeba).